The sequence spans 201 residues: Retinol-binding protein 4 (201 aa).

Positions 1–18 (MEWVWALVVLAALGSAGA) are cleaved as a signal peptide. Cystine bridges form between cysteine 22-cysteine 178, cysteine 88-cysteine 192, and cysteine 138-cysteine 147. Residue glutamine 116 participates in substrate binding. An Omega-N-methylarginine modification is found at arginine 139.

This sequence belongs to the calycin superfamily. Lipocalin family. As to quaternary structure, interacts with TTR. Interaction with TTR prevents its loss by filtration through the kidney glomeruli. Interacts with STRA6.

It is found in the secreted. Functionally, retinol-binding protein that mediates retinol transport in blood plasma. Delivers retinol from the liver stores to the peripheral tissues. Transfers the bound all-trans retinol to STRA6, that then facilitates retinol transport across the cell membrane. The sequence is that of Retinol-binding protein 4 (RBP4) from Equus caballus (Horse).